The chain runs to 606 residues: Aspartate--tRNA(Asp/Asn) ligase (606 aa).

Residue Glu-177 participates in L-aspartate binding. The segment at 201–204 is aspartate; the sequence is QLFK. An L-aspartate-binding site is contributed by Arg-223. ATP is bound by residues 223–225 and Gln-232; that span reads RDE. Residue His-461 coordinates L-aspartate. ATP is bound at residue Glu-499. Arg-506 lines the L-aspartate pocket. Position 551–554 (551–554) interacts with ATP; it reads GMDR.

Belongs to the class-II aminoacyl-tRNA synthetase family. Type 1 subfamily. As to quaternary structure, homodimer.

Its subcellular location is the cytoplasm. It catalyses the reaction tRNA(Asx) + L-aspartate + ATP = L-aspartyl-tRNA(Asx) + AMP + diphosphate. Its function is as follows. Aspartyl-tRNA synthetase with relaxed tRNA specificity since it is able to aspartylate not only its cognate tRNA(Asp) but also tRNA(Asn). Reaction proceeds in two steps: L-aspartate is first activated by ATP to form Asp-AMP and then transferred to the acceptor end of tRNA(Asp/Asn). The sequence is that of Aspartate--tRNA(Asp/Asn) ligase from Prochlorococcus marinus (strain MIT 9313).